The sequence spans 162 residues: Interleukin-15 (162 aa).

An N-terminal signal peptide occupies residues 1–29 (MRILKPYLRSTSIQCYLCLLLNSHFLTEA). Positions 30–48 (CIPVFILSCINAGLPKTEA) are excised as a propeptide. Cystine bridges form between C83/C133 and C90/C136. N-linked (GlcNAc...) asparagine glycosylation is found at N104 and N127.

Belongs to the IL-15/IL-21 family.

The protein localises to the secreted. Cytokine that plays a major role in the development of inflammatory and protective immune responses to microbial invaders and parasites by modulating immune cells of both the innate and adaptive immune systems. Stimulates the proliferation of natural killer cells, T-cells and B-cells and promotes the secretion of several cytokines. In monocytes, induces the production of IL8 and monocyte chemotactic protein 1/CCL2, two chemokines that attract neutrophils and monocytes respectively to sites of infection. Unlike most cytokines, which are secreted in soluble form, IL15 is expressed in association with its high affinity IL15RA on the surface of IL15-producing cells and delivers signals to target cells that express IL2RB and IL2RG receptor subunits. Binding to its receptor triggers the phosphorylation of JAK1 and JAK3 and the recruitment and subsequent phosphorylation of signal transducer and activator of transcription-3/STAT3 and STAT5. In mast cells, induces the rapid tyrosine phosphorylation of STAT6 and thereby controls mast cell survival and release of cytokines such as IL4. The sequence is that of Interleukin-15 (IL15) from Felis catus (Cat).